The following is a 512-amino-acid chain: Cytochrome P450 monooxygenase astD (512 aa).

The chain crosses the membrane as a helical span at residues 19 to 39 (MGISILVMLSTFLALGTIFVY). 2 N-linked (GlcNAc...) asparagine glycosylation sites follow: Asn-191 and Asn-413. Cys-449 lines the heme pocket.

Belongs to the cytochrome P450 family. Requires heme as cofactor.

It is found in the membrane. The protein operates within secondary metabolite biosynthesis; terpenoid biosynthesis. In terms of biological role, cytochrome P450 monooxygenase; part of the gene cluster that mediates the biosynthesis of astellolides, drimane-type sesquiterpene esters that show antimicrobial, anti-inflammatory, and anti-tumor activities. The first step in astellolide biosynthesis is performed by the sesquiterpene cyclase astC that catalyzes the formation of drimanyl pyrophosphate from farnesyl pyrophosphate. Drimanyl pyrophosphate is then dephosphorylated by the sesquiterpene phosphatase astI to produce drimanyl monophosphate which is further dephosphorylated to drim-8-ene-11-ol by atsK. Drim-8-ene-11-ol is converted to confertifolin, probably by the cytochrome P450 monooxygenase astD and/or the dehydrogenase astE. The cytochrome P450 monooxygenases astB, astF and astJ then hydroxylate confertifolin at C6, C14, or C15 to form trihydroxy confertifolin. The nonribosomal peptide synthetase astA catalyzes ester bond formation between trihydroxy contifolin and benzoic acid (BA) or 4-hydroxy benzoic acid (4HBA), leading to the formation of dideacetyl astellolides A and B, respectively. Finally, the O-acetyltransferase astG converts dideacetyl astellolides A and B into deacetyl astellolides A and B. The protein is Cytochrome P450 monooxygenase astD of Aspergillus oryzae (strain ATCC 42149 / RIB 40) (Yellow koji mold).